The chain runs to 412 residues: Glutamate-1-semialdehyde 2,1-aminomutase (412 aa).

Lys-260 carries the N6-(pyridoxal phosphate)lysine modification.

This sequence belongs to the class-III pyridoxal-phosphate-dependent aminotransferase family. HemL subfamily. Pyridoxal 5'-phosphate is required as a cofactor.

The protein localises to the cytoplasm. The enzyme catalyses (S)-4-amino-5-oxopentanoate = 5-aminolevulinate. It participates in porphyrin-containing compound metabolism; protoporphyrin-IX biosynthesis; 5-aminolevulinate from L-glutamyl-tRNA(Glu): step 2/2. The sequence is that of Glutamate-1-semialdehyde 2,1-aminomutase from Methanocorpusculum labreanum (strain ATCC 43576 / DSM 4855 / Z).